A 337-amino-acid chain; its full sequence is Viral cathepsin (337 aa).

A signal peptide spans 1-16 (MNKLLILFLLLNAALT). The propeptide at 17 to 126 (RQDNHASANN…VVDGPAQRQR (110 aa)) is activation peptide. 3 disulfide bridges follow: Cys-147/Cys-188, Cys-181/Cys-221, and Cys-276/Cys-324. Cys-150 is an active-site residue. Catalysis depends on residues His-283 and Asn-303.

It belongs to the peptidase C1 family. Post-translationally, synthesized as an inactive proenzyme and activated by proteolytic removal of the inhibitory propeptide.

The enzyme catalyses Endopeptidase of broad specificity, hydrolyzing substrates of both cathepsin L and cathepsin B.. In terms of biological role, cysteine protease that plays an essential role in host liquefaction to facilitate horizontal transmission of the virus. May participate in the degradation of foreign protein expressed by the baculovirus system. In Lepidoptera (butterflies and moths), this protein is Viral cathepsin (VCATH).